Consider the following 719-residue polypeptide: Ribosomal RNA large subunit methyltransferase K/L (719 aa).

One can recognise a THUMP domain in the interval 43 to 154 (TQYRVLLWTR…REELVISLDL (112 aa)).

Belongs to the methyltransferase superfamily. RlmKL family.

It is found in the cytoplasm. The catalysed reaction is guanosine(2445) in 23S rRNA + S-adenosyl-L-methionine = N(2)-methylguanosine(2445) in 23S rRNA + S-adenosyl-L-homocysteine + H(+). The enzyme catalyses guanosine(2069) in 23S rRNA + S-adenosyl-L-methionine = N(2)-methylguanosine(2069) in 23S rRNA + S-adenosyl-L-homocysteine + H(+). Functionally, specifically methylates the guanine in position 2445 (m2G2445) and the guanine in position 2069 (m7G2069) of 23S rRNA. This chain is Ribosomal RNA large subunit methyltransferase K/L, found in Pasteurella multocida (strain Pm70).